Reading from the N-terminus, the 20-residue chain is Citrate synthase (20 aa).

Belongs to the citrate synthase family. In terms of assembly, homohexamer.

It carries out the reaction oxaloacetate + acetyl-CoA + H2O = citrate + CoA + H(+). It functions in the pathway carbohydrate metabolism; tricarboxylic acid cycle; isocitrate from oxaloacetate: step 1/2. Allosterically inhibited by NADH. The chain is Citrate synthase (gltA) from Streptomyces hygroscopicus.